Reading from the N-terminus, the 255-residue chain is Uracil-DNA glycosylase (255 aa).

Residue aspartate 93 is the Proton acceptor of the active site.

The protein belongs to the uracil-DNA glycosylase (UDG) superfamily. UNG family.

Its subcellular location is the host nucleus. The enzyme catalyses Hydrolyzes single-stranded DNA or mismatched double-stranded DNA and polynucleotides, releasing free uracil.. In terms of biological role, excises uracil residues from the DNA which can arise as a result of misincorporation of dUMP residues by DNA polymerase or deamination of cytosines. Therefore may reduce deleterious uracil incorporation into the viral genome, particularly in terminally differentiated cells which lack DNA repair enzymes. This Human herpesvirus 6A (strain Uganda-1102) (HHV-6 variant A) protein is Uracil-DNA glycosylase (U81).